A 258-amino-acid chain; its full sequence is Pimeloyl-[acyl-carrier protein] methyl ester esterase (258 aa).

In terms of domain architecture, AB hydrolase-1 spans 16-242; that stretch reads LVLLHGWGLN…AAHAPFISHP (227 aa). Substrate-binding positions include Trp22, 82-83, and 143-147; these read SM and FLALQ. Catalysis depends on Ser82, which acts as the Nucleophile. Active-site residues include Asp207 and His235. His235 lines the substrate pocket.

The protein belongs to the AB hydrolase superfamily. Carboxylesterase BioH family. As to quaternary structure, monomer.

The protein localises to the cytoplasm. It carries out the reaction 6-carboxyhexanoyl-[ACP] methyl ester + H2O = 6-carboxyhexanoyl-[ACP] + methanol + H(+). It functions in the pathway cofactor biosynthesis; biotin biosynthesis. In terms of biological role, the physiological role of BioH is to remove the methyl group introduced by BioC when the pimeloyl moiety is complete. It allows to synthesize pimeloyl-ACP via the fatty acid synthetic pathway through the hydrolysis of the ester bonds of pimeloyl-ACP esters. This Yersinia pseudotuberculosis serotype O:1b (strain IP 31758) protein is Pimeloyl-[acyl-carrier protein] methyl ester esterase.